The primary structure comprises 1459 residues: Endogenous retrovirus group K member 7 Pol protein (1459 aa).

Positions 57 to 245 (LEKGHIEPSF…TPFHYLGMQI (189 aa)) constitute a Reverse transcriptase domain. The LPQG motif lies at 161–164 (LPQG). Residues 195-198 (YIDD) carry the YXDD motif. The region spanning 460 to 590 (LENALTVFTD…ADLLVSSALI (131 aa)) is the RNase H type-1 domain. The Mg(2+) site is built by D469, E497, D517, and D582. The Integrase-type zinc-finger motif lies at 587 to 628 (SALIKAQELHALTHVNAAGLKNKFDVTWKQAKDIVQHCTQCQ). Residues H596, H600, C624, and C627 each coordinate Zn(2+). One can recognise an Integrase catalytic domain in the interval 642 to 803 (RGLCPNALWQ…TSAEQHLTGK (162 aa)). Positions 811–859 (KLIWWKDNKNKTWEIGKVITWGRGFACVSPGENQLPVWIPTRHLKFYNE) form a DNA-binding region, integrase-type.

This sequence belongs to the beta type-B retroviral polymerase family. HERV class-II K(HML-2) pol subfamily.

It carries out the reaction DNA(n) + a 2'-deoxyribonucleoside 5'-triphosphate = DNA(n+1) + diphosphate. The catalysed reaction is Endonucleolytic cleavage to 5'-phosphomonoester.. In terms of biological role, early post-infection, the reverse transcriptase converts the viral RNA genome into double-stranded viral DNA. The RNase H domain of the reverse transcriptase performs two functions. It degrades the RNA template and specifically removes the RNA primer from the RNA/DNA hybrid. Following nuclear import, the integrase catalyzes the insertion of the linear, double-stranded viral DNA into the host cell chromosome. Endogenous Pol proteins may have kept, lost or modified their original function during evolution. This is Endogenous retrovirus group K member 7 Pol protein (ERVK-7) from Homo sapiens (Human).